The following is a 263-amino-acid chain: Ribosome maturation factor RimP (263 aa).

The tract at residues 192 to 263 is disordered; it reads EREMKRDLGI…RGEIDPIEGE (72 aa). Residues 217–231 are compositionally biased toward basic residues; the sequence is PARRNAPKPKLKSTA. A compositionally biased stretch (basic and acidic residues) spans 232 to 257; the sequence is KAHEKKPPKNTKEHRLAAERLRRGEI.

It belongs to the RimP family.

It is found in the cytoplasm. Its function is as follows. Required for maturation of 30S ribosomal subunits. The chain is Ribosome maturation factor RimP from Nitrobacter hamburgensis (strain DSM 10229 / NCIMB 13809 / X14).